The sequence spans 873 residues: Cilia- and flagella-associated protein 58 (873 aa).

Coiled coils occupy residues 106 to 609 and 642 to 832; these read VDSA…VISE and ETQY…QKRK. Residues 202–221 are disordered; it reads QEIQHRQNEASRESRKKEKL. Positions 204–221 are enriched in basic and acidic residues; it reads IQHRQNEASRESRKKEKL.

This sequence belongs to the CFAP58 family. As to quaternary structure, interacts with ODFP2. As to expression, predominantly expressed in the testis. Also found at lower levels in ciliated cells and tissues such as neural progenitor cells and oviducts.

The protein localises to the cell projection. It is found in the cilium. Its subcellular location is the flagellum. It localises to the cytoplasm. The protein resides in the cytoskeleton. The protein localises to the microtubule organizing center. It is found in the centrosome. Has an essential role in the assembly and organization of the sperm flagellar axoneme. Required for the elongation of the primary cilium and sperm flagellar midpiece via modulation of the Notch signaling pathway. This chain is Cilia- and flagella-associated protein 58, found in Mus musculus (Mouse).